A 658-amino-acid polypeptide reads, in one-letter code: Probable transketolase (658 aa).

Residue H24 coordinates substrate. Thiamine diphosphate-binding positions include H64 and 113–115 (GPL). D154 lines the Mg(2+) pocket. Residues G155 and N184 each coordinate thiamine diphosphate. N184 and I186 together coordinate Mg(2+). H259, R354, and S381 together coordinate substrate. H259 provides a ligand contact to thiamine diphosphate. The active-site Proton donor is the E408. F434 is a thiamine diphosphate binding site. Residues H458, D466, and R517 each coordinate substrate.

This sequence belongs to the transketolase family. Homodimer. Mg(2+) serves as cofactor. It depends on Ca(2+) as a cofactor. Requires Mn(2+) as cofactor. The cofactor is Co(2+). Thiamine diphosphate is required as a cofactor.

The enzyme catalyses D-sedoheptulose 7-phosphate + D-glyceraldehyde 3-phosphate = aldehydo-D-ribose 5-phosphate + D-xylulose 5-phosphate. Functionally, necessary for high-efficiency recombination chromosomal DNA during genetic transformation. Its function is as follows. Catalyzes the transfer of a two-carbon ketol group from a ketose donor to an aldose acceptor, via a covalent intermediate with the cofactor thiamine pyrophosphate. The protein is Probable transketolase (tkt) of Streptococcus pneumoniae serotype 4 (strain ATCC BAA-334 / TIGR4).